The chain runs to 490 residues: GDP-fucose protein O-fucosyltransferase 2 (490 aa).

The first 25 residues, Met-1 to Ala-25, serve as a signal peptide directing secretion. 2 N-linked (GlcNAc...) asparagine glycosylation sites follow: Asn-29 and Asn-79. Ser-81–Asn-85 contacts GDP-beta-L-fucose. Residue Glu-82 is the Proton acceptor of the active site. Cys-203 and Cys-226 are oxidised to a cystine. Residue His-336–Arg-338 coordinates GDP-beta-L-fucose. Residue Asn-368 is glycosylated (N-linked (GlcNAc...) asparagine). GDP-beta-L-fucose-binding positions include Asp-418 and Thr-435–Phe-436. An intrachain disulfide couples Cys-459 to Cys-466.

Belongs to the glycosyltransferase 68 family.

It localises to the endoplasmic reticulum. It is found in the golgi apparatus. The enzyme catalyses L-seryl-[protein] + GDP-beta-L-fucose = 3-O-(alpha-L-fucosyl)-L-seryl-[protein] + GDP + H(+). It carries out the reaction L-threonyl-[protein] + GDP-beta-L-fucose = 3-O-(alpha-L-fucosyl)-L-threonyl-[protein] + GDP + H(+). Its pathway is protein modification; protein glycosylation. With respect to regulation, does not require divalent metal ions for optimal activity. In terms of biological role, catalyzes the reaction that attaches fucose through an O-glycosidic linkage to a conserved serine or threonine residue in the consensus sequence C1-X-X-S/T-C2 of thrombospondin type I repeats (TSRs) where C1 and C2 are the first and second cysteines of the repeat, respectively. O-fucosylates members of several protein families including the ADAMTS, the thrombospondin (TSP) and spondin families. This Drosophila melanogaster (Fruit fly) protein is GDP-fucose protein O-fucosyltransferase 2.